A 442-amino-acid polypeptide reads, in one-letter code: tRNA modification GTPase MnmE (442 aa).

Residues Arg-27, Glu-84, and Lys-124 each coordinate (6S)-5-formyl-5,6,7,8-tetrahydrofolate. In terms of domain architecture, TrmE-type G spans 221–366; sequence GFQIVILGAP…LMELISQASA (146 aa). Residues 231–236, 250–256, 275–278, and 329–332 each bind GTP; these read NAGKSS, TEEPGTT, DTAG, and NKAD. Residues Ser-235 and Thr-256 each coordinate Mg(2+). Residue Lys-442 participates in (6S)-5-formyl-5,6,7,8-tetrahydrofolate binding.

This sequence belongs to the TRAFAC class TrmE-Era-EngA-EngB-Septin-like GTPase superfamily. TrmE GTPase family. As to quaternary structure, homodimer. Heterotetramer of two MnmE and two MnmG subunits. The cofactor is K(+).

The protein resides in the cytoplasm. Exhibits a very high intrinsic GTPase hydrolysis rate. Involved in the addition of a carboxymethylaminomethyl (cmnm) group at the wobble position (U34) of certain tRNAs, forming tRNA-cmnm(5)s(2)U34. The polypeptide is tRNA modification GTPase MnmE (Chelativorans sp. (strain BNC1)).